Here is a 156-residue protein sequence, read N- to C-terminus: Small ribosomal subunit protein uS7 (156 aa).

The protein belongs to the universal ribosomal protein uS7 family. As to quaternary structure, part of the 30S ribosomal subunit. Contacts proteins S9 and S11.

One of the primary rRNA binding proteins, it binds directly to 16S rRNA where it nucleates assembly of the head domain of the 30S subunit. Is located at the subunit interface close to the decoding center, probably blocks exit of the E-site tRNA. The sequence is that of Small ribosomal subunit protein uS7 from Clostridium botulinum (strain Kyoto / Type A2).